The primary structure comprises 188 residues: Elongation factor P (188 aa).

It belongs to the elongation factor P family.

The protein resides in the cytoplasm. It functions in the pathway protein biosynthesis; polypeptide chain elongation. Its function is as follows. Involved in peptide bond synthesis. Stimulates efficient translation and peptide-bond synthesis on native or reconstituted 70S ribosomes in vitro. Probably functions indirectly by altering the affinity of the ribosome for aminoacyl-tRNA, thus increasing their reactivity as acceptors for peptidyl transferase. In Anaplasma marginale (strain Florida), this protein is Elongation factor P.